A 784-amino-acid chain; its full sequence is ATP-dependent 6-phosphofructokinase, platelet type (784 aa).

Methionine 1 carries the post-translational modification N-acetylmethionine. The interval 1 to 399 is N-terminal catalytic PFK domain 1; that stretch reads MDADDSRAPK…NLNTYKRLAI (399 aa). 3 positions are modified to phosphoserine: serine 6, serine 12, and serine 21. Residues glycine 34, 97 to 98, and 127 to 130 contribute to the ATP site; these read RC and GDGS. Aspartate 128 is a Mg(2+) binding site. Phosphoserine is present on serine 142. Residues 173–175, arginine 210, 217–219, glutamate 273, arginine 301, and 307–310 each bind substrate; these read SID, MGR, and HVQR. Residue aspartate 175 is the Proton acceptor of the active site. Residue serine 386 is modified to Phosphoserine. Lysine 395 bears the N6-acetyllysine mark. The tract at residues 400–411 is interdomain linker; the sequence is KLPDDQIPKTNC. A C-terminal regulatory PFK domain 2 region spans residues 412 to 784; sequence NVAVINVGAP…QLEHVQPWSV (373 aa). Arginine 481 contributes to the beta-D-fructose 2,6-bisphosphate binding site. Residue lysine 486 is modified to N6-acetyllysine. Residues 538–542, arginine 576, 583–585, and glutamate 639 each bind beta-D-fructose 2,6-bisphosphate; these read TVSNN and MGG. O-linked (GlcNAc) serine glycosylation occurs at serine 540. Tyrosine 651 carries the phosphotyrosine modification. Beta-D-fructose 2,6-bisphosphate contacts are provided by residues arginine 665 and 671-674; that span reads HMQQ. Lysine 688 carries the post-translational modification N6-acetyllysine. Residue arginine 744 participates in beta-D-fructose 2,6-bisphosphate binding. Serine 783 is subject to Phosphoserine.

Belongs to the phosphofructokinase type A (PFKA) family. ATP-dependent PFK group I subfamily. Eukaryotic two domain clade 'E' sub-subfamily. As to quaternary structure, homo- and heterotetramers. Phosphofructokinase (PFK) enzyme functions as a tetramer composed of different combinations of 3 types of subunits, called PFKM (M), PFKL (L) and PFKP (P). The composition of the PFK tetramer differs according to the tissue type it is present in. The kinetic and regulatory properties of the tetrameric enzyme are dependent on the subunit composition, hence can vary across tissues. Interacts with ATG4B; promoting phosphorylation of ATG4B. Mg(2+) is required as a cofactor. In terms of processing, glcNAcylation decreases enzyme activity. Phosphorylation at Ser-386 promotes interaction with ATG4B.

Its subcellular location is the cytoplasm. The catalysed reaction is beta-D-fructose 6-phosphate + ATP = beta-D-fructose 1,6-bisphosphate + ADP + H(+). It participates in carbohydrate degradation; glycolysis; D-glyceraldehyde 3-phosphate and glycerone phosphate from D-glucose: step 3/4. With respect to regulation, allosterically activated by ADP, AMP, or fructose 2,6-bisphosphate, and allosterically inhibited by ATP or citrate. Its function is as follows. Catalyzes the phosphorylation of D-fructose 6-phosphate to fructose 1,6-bisphosphate by ATP, the first committing step of glycolysis. The protein is ATP-dependent 6-phosphofructokinase, platelet type (PFKP) of Pongo abelii (Sumatran orangutan).